Here is a 582-residue protein sequence, read N- to C-terminus: ATP-dependent lipid A-core flippase (582 aa).

Transmembrane regions (helical) follow at residues 25–45 (WFMLVISVIGYALYAGAQAGA), 64–84 (VLIVSIAPLVLVLFQGLGQFM), 142–162 (AIIVIIREGLTVIGLFSFLLW), 165–185 (WKLTLILVTVVPLIALVMNIT), and 253–273 (VIVQLFVAVGIGFITYLYIHL). Positions 29–309 (VISVIGYALY…LTDVNVKVQR (281 aa)) constitute an ABC transmembrane type-1 domain. The region spanning 342-577 (IDFEGVSFGY…NGLYTQMYRM (236 aa)) is the ABC transporter domain. An ATP-binding site is contributed by 375 to 382 (GRSGAGKS).

The protein belongs to the ABC transporter superfamily. Lipid exporter (TC 3.A.1.106) family. Homodimer.

It is found in the cell inner membrane. It carries out the reaction ATP + H2O + lipid A-core oligosaccharideSide 1 = ADP + phosphate + lipid A-core oligosaccharideSide 2.. Involved in lipopolysaccharide (LPS) biosynthesis. Translocates lipid A-core from the inner to the outer leaflet of the inner membrane. Transmembrane domains (TMD) form a pore in the inner membrane and the ATP-binding domain (NBD) is responsible for energy generation. In Alcanivorax borkumensis (strain ATCC 700651 / DSM 11573 / NCIMB 13689 / SK2), this protein is ATP-dependent lipid A-core flippase.